We begin with the raw amino-acid sequence, 128 residues long: uncharacterized protein (128 aa).

Positions 1 to 24 are cleaved as a signal peptide; sequence MKMTKLTTLLLTATLGLASGAALA. 2 stretches are compositionally biased toward low complexity: residues 24–44 and 52–70; these read AAESNAQSSNGQANSAANAGQ and NVAPNDVNNNDINTNGNTN. The interval 24–128 is disordered; the sequence is AAESNAQSSN…VNTKTDGTTQ (105 aa). The span at 71-82 shows a compositional bias: polar residues; the sequence is STMQHPDGSTMN. Residues 85-110 are compositionally biased toward basic and acidic residues; the sequence is GMTKDEEHKNTMCKDGRCPDINKKVE. Residues 113-128 show a composition bias toward polar residues; sequence NGVNNDVNTKTDGTTQ.

This is an uncharacterized protein from Salmonella typhi.